The sequence spans 728 residues: MEDPQPLPQSELPLCDSLIIWLQTFKTASPCQDVKQLTNGVTMAQVLHQIDVAWFSESWLSRIKDDVGDNWRIKASNLKKVLHGITSYYHEFLGQQISEELIPDLNQITECADPVELGRLLQLILGCAVNCEKKQEHIKNIMTLEESVQHVVMTAIQELMSKEIVISPASDTVGELEQQLKRALEELQEAIAEKEELKQRCQELDMQVTTLQDEKNSLVSENEMMNEKLDQLDGSFDDPNTMVAKKYFHVQLQLEQLQEENYRLEAAKDDYRVHCEELEKQLIEFQHRNDELTSLAEETRALKDEIDVLRATSDKANKLESTVEVYRQKLQDLNDLRKQVKSLQETNMMYMHNTVSLEEELKKANAARAQLETYKRQVQDLHTKLSSESKRADTLAFEMKRLEEKHETLLKEKERLIEQRDTLKETNEELRCSKAQQDHLNQADASATKSYENLAAEIMPVEYREVFIRLQHENKMLRLQQEGTENERIEQLQEQLEQKHRKMNELETEQRLSKERIGELQQQIEDLQKSLQEQGSKSEGESSSKLKQKLEAHMEKLTEVHEELQKKQELIEDLQPDISQNAQKISELEAALQKKDEDMKAMEERYKMYLEKARNVIKTLDPKLNPASAEIMLLRKQLAEKERRIEILESECKVAKLRDYEEKLIVSAWYNKSLAFQKLGMESRLVSGASACKDSVAAAPARSFLAQQRHITNTRRNLSVKVPAAASD.

Met1 is subject to N-acetylmethionine. Positions 1-555 are sufficient for interaction with microtubules; it reads MEDPQPLPQS…LKQKLEAHME (555 aa). Residues 12–128 enclose the Calponin-homology (CH) domain; the sequence is LPLCDSLIIW…RLLQLILGCA (117 aa). 2 coiled-coil regions span residues 168-443 and 477-658; these read PASD…LNQA and LRLQ…AKLR. At Ser235 the chain carries Phosphoserine. The disordered stretch occupies residues 481–510; it reads QEGTENERIEQLQEQLEQKHRKMNELETEQ. The sufficient for interaction with AKTIP and VPS18 stretch occupies residues 657 to 728; that stretch reads LRDYEEKLIV…SVKVPAAASD (72 aa). Phosphoserine is present on residues Ser719 and Ser727.

Belongs to the hook family. As to quaternary structure, self-associates. Component of the FTS/Hook/FHIP complex (FHF complex), composed of AKTIP/FTS, FHIP1B, and one or more members of the Hook family of proteins HOOK1, HOOK2, and HOOK3. Interacts directly with AKTIP/FTS, HOOK2 and HOOK3. Associates with several subunits of the homotypic vesicular sorting complex (the HOPS complex) including VPS16, VPS18, VPS39 and VPS41; these interactions may be indirect. Interacts with CCDC181. Interacts (via coiled-coil region) with RIMBP3 (via C-terminus). Interacts with LRGUK (via guanylate kinase-like domain). Interacts with microtubules. May interacts with CLN3. Interacts with AP4M1; the interaction is direct, mediates the interaction between FTS-Hook-FHIP (FHF) complex and AP-4 and the perinuclear distribution of AP-4. Mainly expressed in testis.

It localises to the cytoplasm. It is found in the cytoskeleton. Component of the FTS/Hook/FHIP complex (FHF complex). The FHF complex may function to promote vesicle trafficking and/or fusion via the homotypic vesicular protein sorting complex (the HOPS complex). FHF complex promotes the distribution of AP-4 complex to the perinuclear area of the cell. Required for spermatid differentiation. Probably involved in the positioning of the microtubules of the manchette and the flagellum in relation to the membrane skeleton. The sequence is that of Protein Hook homolog 1 (Hook1) from Mus musculus (Mouse).